The primary structure comprises 426 residues: D-tagatose-1,6-bisphosphate aldolase subunit KbaZ (426 aa).

It belongs to the GatZ/KbaZ family. KbaZ subfamily. In terms of assembly, forms a complex with KbaY.

It participates in carbohydrate metabolism; D-tagatose 6-phosphate degradation; D-glyceraldehyde 3-phosphate and glycerone phosphate from D-tagatose 6-phosphate: step 2/2. Its function is as follows. Component of the tagatose-1,6-bisphosphate aldolase KbaYZ that is required for full activity and stability of the Y subunit. Could have a chaperone-like function for the proper and stable folding of KbaY. When expressed alone, KbaZ does not show any aldolase activity. The chain is D-tagatose-1,6-bisphosphate aldolase subunit KbaZ from Escherichia coli O139:H28 (strain E24377A / ETEC).